The chain runs to 213 residues: High frequency lysogenization protein HflD homolog (213 aa).

Residues 79-122 (QGLNAELTRYTLSLMVLERKLSSAKGALNTLGDRINGLQRQLDH) adopt a coiled-coil conformation.

Belongs to the HflD family.

It is found in the cytoplasm. The protein resides in the cell inner membrane. The protein is High frequency lysogenization protein HflD homolog of Salmonella dublin (strain CT_02021853).